The chain runs to 394 residues: MNKPAVIALVITLLDAMGIGLIMPVLPSLLREYLPEADVANHYGILLALYAVMQVCFAPLLGRWSDKLGRRPVLLLSLAGAAFDYTLLALSNVLWMLYLGRIISGITGATGAVAASVVADSTAVSERTAWFGRLGAAFGAGLIAGPAIGGLAGDISPHLPFVIAAILNACTFLMVFFIFKPAVQTEEKPADEKQESAGISFITLLKPLALLLFVFFTAQLIGQIPATVWVLFTESRFAWDSAAVGFSLAGLGAMHALFQAVVAGALAKRLSEKTIIFAGFIADATAFLLMSAITSGWMVYPVLILLAGGGIALPALQGIISAGASAANQGKLQGVLVSLTNLTGVAGPLLFAFIFSQTQQSADGTVWLIGTALYGLLLAICLLIRKPAPVAATC.

Transmembrane regions (helical) follow at residues 6-26, 42-62, 73-93, 94-114, 135-155, 159-179, 198-218, 243-263, 274-294, 296-316, 335-355, and 364-384; these read VIALVITLLDAMGIGLIMPVL, HYGILLALYAVMQVCFAPLLG, VLLLSLAGAAFDYTLLALSNV, LWMLYLGRIISGITGATGAVA, GAAFGAGLIAGPAIGGLAGDI, LPFVIAAILNACTFLMVFFIF, GISFITLLKPLALLLFVFFTA, AVGFSLAGLGAMHALFQAVVA, TIIFAGFIADATAFLLMSAIT, GWMVYPVLILLAGGGIALPAL, VLVSLTNLTGVAGPLLFAFIF, and GTVWLIGTALYGLLLAICLLI.

This sequence belongs to the major facilitator superfamily. TCR/Tet family.

It localises to the cell inner membrane. Functionally, resistance to tetracycline by an active tetracycline efflux. This is an energy-dependent process that decreases the accumulation of the antibiotic in whole cells. This protein functions as a metal-tetracycline/H(+) antiporter. In Salmonella ordonez, this protein is Tetracycline resistance protein, class D (tetA).